The chain runs to 65 residues: Large ribosomal subunit protein bL31 (65 aa).

Residues Cys16, Cys18, Cys36, and Cys39 each contribute to the Zn(2+) site.

The protein belongs to the bacterial ribosomal protein bL31 family. Type A subfamily. Part of the 50S ribosomal subunit. The cofactor is Zn(2+).

Its function is as follows. Binds the 23S rRNA. The chain is Large ribosomal subunit protein bL31 from Campylobacter jejuni subsp. doylei (strain ATCC BAA-1458 / RM4099 / 269.97).